A 1427-amino-acid polypeptide reads, in one-letter code: DNA-directed RNA polymerase subunit beta' (1427 aa).

Residues cysteine 66, cysteine 68, cysteine 81, and cysteine 84 each coordinate Zn(2+). Positions 472, 474, and 476 each coordinate Mg(2+). Cysteine 815, cysteine 889, cysteine 896, and cysteine 899 together coordinate Zn(2+).

This sequence belongs to the RNA polymerase beta' chain family. The RNAP catalytic core consists of 2 alpha, 1 beta, 1 beta' and 1 omega subunit. When a sigma factor is associated with the core the holoenzyme is formed, which can initiate transcription. Requires Mg(2+) as cofactor. It depends on Zn(2+) as a cofactor.

The catalysed reaction is RNA(n) + a ribonucleoside 5'-triphosphate = RNA(n+1) + diphosphate. Its function is as follows. DNA-dependent RNA polymerase catalyzes the transcription of DNA into RNA using the four ribonucleoside triphosphates as substrates. The polypeptide is DNA-directed RNA polymerase subunit beta' (Bacteroides fragilis (strain YCH46)).